Consider the following 375-residue polypeptide: Leucoanthocyanidin dioxygenase 1 (375 aa).

One can recognise a Fe2OG dioxygenase domain in the interval 218 to 317; that stretch reads LLLQLKINYY…RLSWVVFCEP (100 aa). Fe cation contacts are provided by His242, Asp244, and His298. Arg308 contributes to the 2-oxoglutarate binding site.

It belongs to the iron/ascorbate-dependent oxidoreductase family. L-ascorbate is required as a cofactor. Fe(2+) serves as cofactor.

It catalyses the reaction a (2R,3S,4S)-leucoanthocyanidin + 2-oxoglutarate + O2 = a 4-H-anthocyanidin with a 3-hydroxy group + succinate + CO2 + 2 H2O. Its pathway is pigment biosynthesis; anthocyanin biosynthesis. In terms of biological role, involved in anthocyanin and protoanthocyanidin biosynthesis by catalyzing the oxidation of leucoanthocyanidins into anthocyanidins. Is able to synthesize anthocyanin pigments from leucoanthocyanidins in aleurone tissue. Converts dihydroquercetin to quercetin in vitro. The chain is Leucoanthocyanidin dioxygenase 1 from Oryza sativa subsp. indica (Rice).